A 434-amino-acid polypeptide reads, in one-letter code: Lipoyl synthase, mitochondrial (434 aa).

The transit peptide at 1-31 (MAASARGLRTLQSAHSSTTVPRLQLAVSRCY) directs the protein to the mitochondrion. Positions 34–54 (TTSPDPPITNSSNSSNSTPTP) are enriched in low complexity. A disordered region spans residues 34-55 (TTSPDPPITNSSNSSNSTPTPK). [4Fe-4S] cluster contacts are provided by cysteine 144, cysteine 149, cysteine 155, cysteine 175, cysteine 179, cysteine 182, and serine 390. One can recognise a Radical SAM core domain in the interval 158 to 379 (GSSKSAATAT…KERALEMGFL (222 aa)).

This sequence belongs to the radical SAM superfamily. Lipoyl synthase family. The cofactor is [4Fe-4S] cluster.

Its subcellular location is the mitochondrion. It carries out the reaction [[Fe-S] cluster scaffold protein carrying a second [4Fe-4S](2+) cluster] + N(6)-octanoyl-L-lysyl-[protein] + 2 oxidized [2Fe-2S]-[ferredoxin] + 2 S-adenosyl-L-methionine + 4 H(+) = [[Fe-S] cluster scaffold protein] + N(6)-[(R)-dihydrolipoyl]-L-lysyl-[protein] + 4 Fe(3+) + 2 hydrogen sulfide + 2 5'-deoxyadenosine + 2 L-methionine + 2 reduced [2Fe-2S]-[ferredoxin]. The protein operates within protein modification; protein lipoylation via endogenous pathway; protein N(6)-(lipoyl)lysine from octanoyl-[acyl-carrier-protein]: step 2/2. Catalyzes the radical-mediated insertion of two sulfur atoms into the C-6 and C-8 positions of the octanoyl moiety bound to the lipoyl domains of lipoate-dependent enzymes, thereby converting the octanoylated domains into lipoylated derivatives. The chain is Lipoyl synthase, mitochondrial from Paracoccidioides brasiliensis (strain Pb03).